We begin with the raw amino-acid sequence, 389 residues long: MVTRAGAGAAVAATAVVALLSAALALYRPPLDAVLERAFSLRKVHSIKDMENTLQLVRNIIPPLSSTKHKGQDGRIGVVGGCQEYTGAPYFAAISALKVGADLSHVFCASAAAPVIKAYSPELIVHPVLDSPSAVDEVEKWLPRLHALVFHCERGTQPGFLFWQGILEASKARDIPVVIDADGLWLVAQQPALIQGYQKAVLTPNHMEFSRLYDAVLRGPVDSDDRHGSVLRLSQALGNVTVVQKGERDILSNGQQVLVCSQEGSSRRCGGQGDLLSGSLGVLVHWALLAGPEKTNGGMLDLKLTIWGPKIETGIKTRAQGGCGPRTTAPTSPHLPLSPSPQVQPSPGGCIRRLLSHQAVQPPSLPEARSLHHHLRHDRRGGGRLPQAL.

Residues 53–389 form the YjeF C-terminal domain; the sequence is TLQLVRNIIP…RGGGRLPQAL (337 aa). Phosphotyrosine is present on Tyr-85. (6S)-NADPHX-binding positions include Glu-153 and 205 to 211; that span reads NHMEFSR. Residues 245-249 and 264-273 contribute to the ATP site; these read KGERD and GSSRRCGGQG. Asp-274 lines the (6S)-NADPHX pocket. Disordered regions lie at residues 316–350 and 369–389; these read KTRA…PGGC and RSLH…PQAL.

It belongs to the NnrD/CARKD family. It depends on Mg(2+) as a cofactor.

It localises to the mitochondrion. It catalyses the reaction (6S)-NADHX + ATP = ADP + phosphate + NADH + H(+). The catalysed reaction is (6S)-NADPHX + ATP = ADP + phosphate + NADPH + H(+). Functionally, catalyzes the dehydration of the S-form of NAD(P)HX at the expense of ATP, which is converted to ADP. Together with NAD(P)HX epimerase, which catalyzes the epimerization of the S- and R-forms, the enzyme allows the repair of both epimers of NAD(P)HX, a damaged form of NAD(P)H that is a result of enzymatic or heat-dependent hydration. The chain is ATP-dependent (S)-NAD(P)H-hydrate dehydratase from Macaca mulatta (Rhesus macaque).